A 398-amino-acid chain; its full sequence is UDP-D-apiose/UDP-D-xylose synthase (398 aa).

NAD(+) is bound at residue 57 to 88 (DVYCDKIRHLVDPAPPHLHGRISFHRLNIKND). Arginine 190 is a binding site for substrate. The active-site Proton acceptor is the tyrosine 193. Residue 193–197 (YACAK) coordinates NAD(+). Residue asparagine 222 participates in substrate binding. Arginine 243 is an NAD(+) binding site. Substrate is bound by residues 244 to 248 (VLACF), 261 to 268 (VDGGQSQR), and 345 to 349 (DSDKR).

Belongs to the NAD(P)-dependent epimerase/dehydratase family. In terms of assembly, homodimer. NAD(+) serves as cofactor.

The protein localises to the cytoplasm. Functionally, catalyzes the conversion of UDP-D-glucuronate to a mixture of UDP-D-apiose and UDP-D-xylose. D-Apiose (3-C-hydroxymethyl-d-erythrose) is the only plant cell wall monosaccharide with a branched carbon skeleton and found in rhamnogalacturonan II (RG-II), apiogalacturonan, and several apioglycosides. This Oryza sativa subsp. japonica (Rice) protein is UDP-D-apiose/UDP-D-xylose synthase.